The sequence spans 329 residues: Lipoyl synthase (329 aa).

Residues C72, C77, C83, C98, C102, C105, and S313 each contribute to the [4Fe-4S] cluster site. Positions 83–303 (CWSHGTATIM…QIGLKKGFFE (221 aa)) constitute a Radical SAM core domain.

It belongs to the radical SAM superfamily. Lipoyl synthase family. It depends on [4Fe-4S] cluster as a cofactor.

It localises to the cytoplasm. It carries out the reaction [[Fe-S] cluster scaffold protein carrying a second [4Fe-4S](2+) cluster] + N(6)-octanoyl-L-lysyl-[protein] + 2 oxidized [2Fe-2S]-[ferredoxin] + 2 S-adenosyl-L-methionine + 4 H(+) = [[Fe-S] cluster scaffold protein] + N(6)-[(R)-dihydrolipoyl]-L-lysyl-[protein] + 4 Fe(3+) + 2 hydrogen sulfide + 2 5'-deoxyadenosine + 2 L-methionine + 2 reduced [2Fe-2S]-[ferredoxin]. It participates in protein modification; protein lipoylation via endogenous pathway; protein N(6)-(lipoyl)lysine from octanoyl-[acyl-carrier-protein]: step 2/2. Functionally, catalyzes the radical-mediated insertion of two sulfur atoms into the C-6 and C-8 positions of the octanoyl moiety bound to the lipoyl domains of lipoate-dependent enzymes, thereby converting the octanoylated domains into lipoylated derivatives. This is Lipoyl synthase from Legionella pneumophila (strain Corby).